Consider the following 478-residue polypeptide: RNA exonuclease 3 (478 aa).

An Exonuclease domain is found at 320–465 (VLALDCEMAF…EDAIAAMDVI (146 aa)).

It belongs to the REXO1/REXO3 family.

The protein localises to the cytoplasm. Its subcellular location is the nucleus. In terms of biological role, 3' to 5' exoribonuclease required for proper 3' end maturation of MRP RNA and of the U5L snRNA. The chain is RNA exonuclease 3 (REX3) from Kluyveromyces lactis (strain ATCC 8585 / CBS 2359 / DSM 70799 / NBRC 1267 / NRRL Y-1140 / WM37) (Yeast).